A 428-amino-acid chain; its full sequence is E3 ubiquitin-protein ligase RNF128 (428 aa).

The first 38 residues, 1–38, serve as a signal peptide directing secretion; that stretch reads MGPPLGAGVSCRGGCGSSRLLAWCFLLALSPQAPGSRG. N-linked (GlcNAc...) asparagine glycosylation is found at N48, N59, and N101. The 109-residue stretch at 75 to 183 folds into the PA domain; sequence SPLEPVAGVL…LKGTKILQSI (109 aa). Residues 208 to 228 traverse the membrane as a helical segment; the sequence is IFFVSVSFFIITAATVGYFIF. The RING-type; atypical zinc-finger motif lies at 277–318; that stretch reads CAVCIELYKPNDLVRILTCNHIFHKTCVDPWLLEHRTCPMCK. The segment at 346–428 is disordered; the sequence is ISNSASSHEE…QETAVREIKS (83 aa). Residues 416–428 show a composition bias toward basic and acidic residues; it reads TPHQETAVREIKS.

Post-translationally, auto-ubiquitinated. Controls the development of T-cell clonal anergy by ubiquitination.

It localises to the cytoplasm. The protein resides in the endomembrane system. Its subcellular location is the cytoskeleton. The protein localises to the perinuclear region. It catalyses the reaction S-ubiquitinyl-[E2 ubiquitin-conjugating enzyme]-L-cysteine + [acceptor protein]-L-lysine = [E2 ubiquitin-conjugating enzyme]-L-cysteine + N(6)-ubiquitinyl-[acceptor protein]-L-lysine.. Its pathway is protein modification; protein ubiquitination. Functionally, E3 ubiquitin-protein ligase that catalyzes 'Lys-27', 'Lys-48'- or 'Lys-63'-linked polyubiquitin chains formation and plays a role in different biological processes such as modulation of immune response, cytoskeletal dynamics or protein homeostasis. Inhibits IL2 and IL4 transcription, thereby playing an important role in the induction of the anergic phenotype, a long-term stable state of T-lymphocyte unresponsiveness to antigenic stimulation associated with the blockade of interleukin production. Ubiquitinates ARPC5 with 'Lys-48' linkages and COR1A with 'Lys-63' linkages leading to their degradation, down-regulation of these cytoskeletal components results in impaired lamellipodium formation and reduced accumulation of F-actin at the immunological synapse. Functions in the patterning of the dorsal ectoderm; sensitizes ectoderm to respond to neural-inducing signals. Plays a positive role in innate immune response by promoting 'Lys-63'-linked ubiquitination of TBK1 after RNA- or DNA-virus infection. Regulates alveolar macrophage activation and neutrophil infiltration by interacting with TLR4, targeting it for degradation, and inhibiting NF-kappa-B activation, hence decreasing pro-inflammatory cytokines. Negatively regulates the IL-3/STAT5 signaling pathway by facilitating 'Lys-27'-linked polyubiquitination of IL3RA leading to its degradation via lysosomal pathway. Directly regulates the N-glycosylation process in the endoplasmic reticulum by targeting the glycosyl-transferase RPN1 for ubiquitination and degradation. Other substrates targeted for degradation by RNF128 include transmembrane proteins CD40L, CD83 or the tetraspanin CD151. The polypeptide is E3 ubiquitin-protein ligase RNF128 (RNF128) (Pongo abelii (Sumatran orangutan)).